We begin with the raw amino-acid sequence, 297 residues long: Transcription factor MYB1R1 (297 aa).

Residues 44 to 96 (DLSQYEHPNANNNNNGGDNNESSKVAQDEGYASADDAVQHQSNSGRERKRGVP) form a disordered region. Over residues 52–63 (NANNNNNGGDNN) the composition is skewed to low complexity. The HTH myb-type domain maps to 89-145 (RERKRGVPWTEEEHKLFLLGLQKVGKGDWRGISRNFVKTRTPTQVASHAQKYFLRRS). Residues 117 to 141 (WRGISRNFVKTRTPTQVASHAQKYF) constitute a DNA-binding region (H-T-H motif).

Its subcellular location is the nucleus. The protein localises to the cytoplasm. It localises to the cytosol. Binds selectively to the DNA sequence 5'-[GA]GATAA-3' and may act as a transcription factor involved in the regulation of drought-responsive genes. Enhances stomatal closure in response to abscisic acid (ABA). Confers drought and salt tolerance. The protein is Transcription factor MYB1R1 of Solanum tuberosum (Potato).